We begin with the raw amino-acid sequence, 203 residues long: Translation initiation factor IF-3 (203 aa).

Basic and acidic residues predominate over residues Glu-172 to Glu-182. A disordered region spans residues Glu-172–Asp-203.

This sequence belongs to the IF-3 family. Monomer.

It is found in the cytoplasm. Its function is as follows. IF-3 binds to the 30S ribosomal subunit and shifts the equilibrium between 70S ribosomes and their 50S and 30S subunits in favor of the free subunits, thus enhancing the availability of 30S subunits on which protein synthesis initiation begins. The protein is Translation initiation factor IF-3 of Helicobacter pylori (strain ATCC 700392 / 26695) (Campylobacter pylori).